Here is a 1452-residue protein sequence, read N- to C-terminus: Pleiotropic drug resistance protein 1 (1452 aa).

In terms of domain architecture, ABC transporter 1 spans 152–425 (LNYLHILPNR…FEYMGFICPE (274 aa)). 185 to 192 (GPPSSGKT) contributes to the ATP binding site. Residues 504–716 (LLKACTAREY…AQNAIAVNEF (213 aa)) form the ABC transmembrane type-2 1 domain. Helical transmembrane passes span 521–541 (FVYIFKMIQLTLMASITMTLF), 554–574 (GAVFLGALFYALIMIMFNGFS), 609–629 (IPITLVEVAIWVCMTYYVIGF), 640–660 (LLLLICVNQMASGLFRLMGAL), 664–684 (IIVANTFGSFVLLTVLVMGGF), 694–714 (WWIWGYWISPMMYAQNAIAVN), and 753–773 (IGAGALIGYVFLFNFLFAVAL). The tract at residues 808 to 830 (LGKSSSEKGNDVRRSASSRSMSS) is disordered. Residues 812–821 (SSEKGNDVRR) are compositionally biased toward basic and acidic residues. The ABC transporter 2 domain occupies 855–1107 (ITFDDIRYAV…HLIKYFEGID (253 aa)). ATP is bound at residue 900 to 907 (GVSGAGKT). The region spanning 1180–1394 (TQCMACFWKQ…TLYGLIASQF (215 aa)) is the ABC transmembrane type-2 2 domain. The next 7 helical transmembrane spans lie at 1199–1219 (YTAVRIMFTFFIALMFGTIFW), 1239–1259 (YIAVLFLGVQNATTVQPVIAI), 1287–1307 (LPYLFLQTIIYGVIVYAMIGF), 1314–1334 (FFWYLFFMYFTLLYFTLYGMM), 1344–1364 (IAAIISSAFYAVWNLFCGFIV), 1375–1395 (WYYYICPISWTLYGLIASQFG), and 1421–1441 (FVGYVALILVGISVLFLFIFA).

Belongs to the ABC transporter superfamily. ABCG family. PDR (TC 3.A.1.205) subfamily. As to expression, expressed in root hypodermal passage cells. Expressed in stem tissues, particularly the vasculature and nodes adjacent to leaf axils.

Its subcellular location is the cell membrane. Cellular strigolactone (SL) transporter required for the exudation of SL from the root to the soil. The presence of SL in the vicinity of the roots is required for development of symbiotic interactions with arbuscular mycorrhizal fungi (AMF). Transports SL in the above ground tissues and is required for the control of shoot branching. SL regulates plant shoot architecture by inhibiting the outgrowth of axillary buds. Involved in the regulation of shootward and outward directional strigolactone transport in roots. Due to its polar localization in root cells, mediates directional shootward strigolactone transport, as well as localized outward directional transport for exudation to the soil. The polypeptide is Pleiotropic drug resistance protein 1 (Petunia hybrida (Petunia)).